The sequence spans 117 residues: Resistin-like gamma (117 aa).

The N-terminal stretch at 1–29 is a signal peptide; the sequence is MLTFNKMKTTTCSLLICISLLQLMVPVNT. 5 cysteine pairs are disulfide-bonded: C61–C114, C73–C113, C82–C99, C84–C101, and C88–C103.

Belongs to the resistin/FIZZ family. In terms of assembly, homodimer. Heterodimer with RETNLB. As to expression, expressed in colon, lung, spleen, pancreas, ileum and bone marrow (at protein level). In colon, found throughout the crypt and surface epithelium, including goblet cells (at protein level). Highest expression is observed in bone marrow, spleen and lung, with lower levels in other tissues. Detected at low levels in granulocytes, but not found in monocytes or lymphocytes. Has very weak expression in white adipose tissue.

The protein localises to the secreted. In terms of biological role, probable hormone. Promotes chemotaxis in myeloid cells. This chain is Resistin-like gamma, found in Mus musculus (Mouse).